Consider the following 227-residue polypeptide: Phosphatidylserine decarboxylase proenzyme (227 aa).

S184 serves as the catalytic Schiff-base intermediate with substrate; via pyruvic acid. Residue S184 is modified to Pyruvic acid (Ser); by autocatalysis.

This sequence belongs to the phosphatidylserine decarboxylase family. PSD-A subfamily. Heterodimer of a large membrane-associated beta subunit and a small pyruvoyl-containing alpha subunit. It depends on pyruvate as a cofactor. In terms of processing, is synthesized initially as an inactive proenzyme. Formation of the active enzyme involves a self-maturation process in which the active site pyruvoyl group is generated from an internal serine residue via an autocatalytic post-translational modification. Two non-identical subunits are generated from the proenzyme in this reaction, and the pyruvate is formed at the N-terminus of the alpha chain, which is derived from the carboxyl end of the proenzyme. The post-translation cleavage follows an unusual pathway, termed non-hydrolytic serinolysis, in which the side chain hydroxyl group of the serine supplies its oxygen atom to form the C-terminus of the beta chain, while the remainder of the serine residue undergoes an oxidative deamination to produce ammonia and the pyruvoyl prosthetic group on the alpha chain.

Its subcellular location is the cell membrane. The enzyme catalyses a 1,2-diacyl-sn-glycero-3-phospho-L-serine + H(+) = a 1,2-diacyl-sn-glycero-3-phosphoethanolamine + CO2. It participates in phospholipid metabolism; phosphatidylethanolamine biosynthesis; phosphatidylethanolamine from CDP-diacylglycerol: step 2/2. Functionally, catalyzes the formation of phosphatidylethanolamine (PtdEtn) from phosphatidylserine (PtdSer). This Ehrlichia ruminantium (strain Welgevonden) protein is Phosphatidylserine decarboxylase proenzyme.